The following is a 492-amino-acid chain: Transmembrane protein 104 homolog (492 aa).

Over 1 to 18 the chain is Cytoplasmic; that stretch reads MQSNTDSSGTSGTYSQTV. A helical transmembrane segment spans residues 19–39; that stretch reads GLLYVFNLIVGTGALALPKAF. Residues 40–45 lie on the Extracellular side of the membrane; the sequence is QSAGWL. Residues 46–66 traverse the membrane as a helical segment; it reads LSISLLTFSAFMSYVAATFVI. Residues 67–114 lie on the Cytoplasmic side of the membrane; the sequence is EALSVANAVLSKKRRVEYDDVVVADGPSTFEIAKKVEVSEMASMFLSK. The helical transmembrane segment at 115 to 135 threads the bilayer; that stretch reads VSLVFSYFAIIIYLFGDLAIY. The Extracellular segment spans residues 136-177; it reads STTVPKSAMNIVCSTINATIVKSSDPCHESWPEILTRMTVYR. A glycan (N-linked (GlcNAc...) asparagine) is linked at asparagine 152. The helical transmembrane segment at 178-198 threads the bilayer; the sequence is FFVIVFVVVVCLPMVIAGITK. Residues 199-210 are Cytoplasmic-facing; it reads TRHIQIMTTLSR. Residues 211–231 form a helical membrane-spanning segment; it reads WAAFILMISLATMQLSSQGAA. Topologically, residues 232-238 are extracellular; it reads AHPPAYN. A helical membrane pass occupies residues 239 to 259; that stretch reads FHGFGSLFGCAVYAFMCHHSI. At 260–275 the chain is on the cytoplasmic side; sequence PSLITPMRTKENVFGK. The helical transmembrane segment at 276–296 threads the bilayer; sequence IAVVYGIVGVFYFTLSLTGAF. Topologically, residues 297-325 are extracellular; the sequence is AFEHVQDIYTLNFLHDDNTSLVYSIIDYF. A glycan (N-linked (GlcNAc...) asparagine) is linked at asparagine 314. A helical transmembrane segment spans residues 326-346; sequence LALFPIITLTSSYPIIALTLI. Topologically, residues 347–391 are cytoplasmic; the sequence is NNFKVVKDILCPKTGQENESLLEADNQVEDNDTDDEREARNGNPK. The segment covering 367–382 has biased composition (acidic residues); sequence LLEADNQVEDNDTDDE. A disordered region spans residues 367–387; the sequence is LLEADNQVEDNDTDDEREARN. Residues 392–412 traverse the membrane as a helical segment; that stretch reads TIFDVLVPTLVLALPTFLSLL. Residues 413–415 lie on the Extracellular side of the membrane; that stretch reads TDD. Residues 416–436 traverse the membrane as a helical segment; it reads MLLLASITGSFPGVAVQFAIP. The Cytoplasmic segment spans residues 437–466; sequence CLLVTAARKHARSVLNFPVPRKNNSPFQSR. Residues 467–487 form a helical membrane-spanning segment; it reads FWIMLISSWAGFSMIMVLLNL. At 488-492 the chain is on the extracellular side; it reads VGVKF.

This sequence belongs to the TMEM104 family.

The protein resides in the membrane. This is Transmembrane protein 104 homolog from Caenorhabditis briggsae.